The following is a 478-amino-acid chain: Sulfate adenylyltransferase subunit 1 (478 aa).

Residues 28–244 form the tr-type G domain; it reads KTMLRFLTCG…LESVDVVNAS (217 aa). The G1 stretch occupies residues 37-44; sequence GSVDDGKS. 37–44 contributes to the GTP binding site; the sequence is GSVDDGKS. Residues 95-99 form a G2 region; the sequence is GITID. Positions 116–119 are G3; the sequence is DTPG. Residues 116 to 120 and 171 to 174 contribute to the GTP site; these read DTPGH and NKMD. The G4 stretch occupies residues 171–174; that stretch reads NKMD. Residues 209 to 211 form a G5 region; the sequence is SAL.

This sequence belongs to the TRAFAC class translation factor GTPase superfamily. Classic translation factor GTPase family. CysN/NodQ subfamily. As to quaternary structure, heterodimer composed of CysD, the smaller subunit, and CysN.

It carries out the reaction sulfate + ATP + H(+) = adenosine 5'-phosphosulfate + diphosphate. It functions in the pathway sulfur metabolism; hydrogen sulfide biosynthesis; sulfite from sulfate: step 1/3. Its function is as follows. With CysD forms the ATP sulfurylase (ATPS) that catalyzes the adenylation of sulfate producing adenosine 5'-phosphosulfate (APS) and diphosphate, the first enzymatic step in sulfur assimilation pathway. APS synthesis involves the formation of a high-energy phosphoric-sulfuric acid anhydride bond driven by GTP hydrolysis by CysN coupled to ATP hydrolysis by CysD. The sequence is that of Sulfate adenylyltransferase subunit 1 from Yersinia enterocolitica serotype O:8 / biotype 1B (strain NCTC 13174 / 8081).